A 567-amino-acid chain; its full sequence is Arginine--tRNA ligase (567 aa).

The 'HIGH' region motif lies at 121–131 (ANPNGPLHVGH).

Belongs to the class-I aminoacyl-tRNA synthetase family.

It is found in the cytoplasm. The catalysed reaction is tRNA(Arg) + L-arginine + ATP = L-arginyl-tRNA(Arg) + AMP + diphosphate. The polypeptide is Arginine--tRNA ligase (Methanosarcina acetivorans (strain ATCC 35395 / DSM 2834 / JCM 12185 / C2A)).